The chain runs to 259 residues: O-antigen export system permease protein RfbA (259 aa).

Transmembrane regions (helical) follow at residues Leu-33–Phe-53, Phe-73–Ile-95, Val-111–Val-131, Trp-142–Phe-162, Val-176–Ile-196, and Glu-228–Phe-248. Positions Leu-33–Leu-251 constitute an ABC transmembrane type-2 domain.

The protein belongs to the ABC-2 integral membrane protein family.

It localises to the cell inner membrane. In terms of biological role, may form an ATP-driven O-antigen export apparatus, in association with RfbB. The chain is O-antigen export system permease protein RfbA (rfbA) from Klebsiella pneumoniae.